A 110-amino-acid polypeptide reads, in one-letter code: Large ribosomal subunit protein P1B (110 aa).

Over residues Pro69 to Ala85 the composition is skewed to low complexity. The interval Pro69–Asp110 is disordered. Over residues Lys95–Met104 the composition is skewed to acidic residues.

This sequence belongs to the eukaryotic ribosomal protein P1/P2 family. In terms of assembly, component of the large ribosomal subunit (LSU). Mature yeast ribosomes consist of a small (40S) and a large (60S) subunit. The 40S small subunit contains 1 molecule of ribosomal RNA (18S rRNA) and at least 33 different proteins. The large 60S subunit contains 3 rRNA molecules (25S, 5.8S and 5S rRNA) and at least 46 different proteins. The acidic ribosomal P-proteins form the stalk structure of the 60S subunit. They are organized as a pentameric complex in which uL10/P0 interacts with 2 heterodimers of P1 and P2 proteins.

Its subcellular location is the cytoplasm. Its function is as follows. Component of the ribosome, a large ribonucleoprotein complex responsible for the synthesis of proteins in the cell. The small ribosomal subunit (SSU) binds messenger RNAs (mRNAs) and translates the encoded message by selecting cognate aminoacyl-transfer RNA (tRNA) molecules. The large subunit (LSU) contains the ribosomal catalytic site termed the peptidyl transferase center (PTC), which catalyzes the formation of peptide bonds, thereby polymerizing the amino acids delivered by tRNAs into a polypeptide chain. The nascent polypeptides leave the ribosome through a tunnel in the LSU and interact with protein factors that function in enzymatic processing, targeting, and the membrane insertion of nascent chains at the exit of the ribosomal tunnel. The protein is Large ribosomal subunit protein P1B (rpp102) of Schizosaccharomyces pombe (strain 972 / ATCC 24843) (Fission yeast).